Consider the following 94-residue polypeptide: Small ribosomal subunit protein bS18c (94 aa).

The protein belongs to the bacterial ribosomal protein bS18 family. Part of the 30S ribosomal subunit.

It is found in the plastid. The protein localises to the chloroplast. This chain is Small ribosomal subunit protein bS18c, found in Manihot esculenta (Cassava).